The primary structure comprises 337 residues: Glucokinase (337 aa).

Residue 11–16 (ADIGGT) participates in ATP binding.

It belongs to the bacterial glucokinase family.

The protein resides in the cytoplasm. It carries out the reaction D-glucose + ATP = D-glucose 6-phosphate + ADP + H(+). The protein is Glucokinase of Xylella fastidiosa (strain 9a5c).